Consider the following 117-residue polypeptide: Reprimo-like protein (117 aa).

The chain crosses the membrane as a helical span at residues 64–84 (VAQIAVLCVLSLTVVFGVFFL). Position 106 is a phosphoserine (Ser106).

Belongs to the reprimo family.

Its subcellular location is the membrane. This is Reprimo-like protein (Rprml) from Mus musculus (Mouse).